The chain runs to 277 residues: MELWFTENQDENLRFSLKVKETLVVEKTPYQHLAILDTYQFGRVLTLDGILQTTEKDEFVYHEMIVHVPLFTHKNPKSVLIVGGGDGGSVREVLKHPSVERVVLAEIDEAVVRNSKKYLPTISQALDDPRVEIMIGDGIKYVNEHKNEFDVVIVDSTDPIGPAVGLFTSDFYKAVYECLKEDGIIVAQTESPFIYGKLINKLSKMFKEIYPITKAYIATIPTYPGSLWTFTMGSKKYDPEEVDINSIPRIDTKYYTPEIHKAAFVLPKFVKDIFDEV.

In terms of domain architecture, PABS spans 2–235; it reads ELWFTENQDE…SLWTFTMGSK (234 aa). Gln-31 is a binding site for S-methyl-5'-thioadenosine. His-62 and Asp-86 together coordinate spermidine. Residues Glu-106 and 137-138 each bind S-methyl-5'-thioadenosine; that span reads DG. Asp-155 (proton acceptor) is an active-site residue. 155–158 lines the spermidine pocket; sequence DSTD. Position 162 (Pro-162) interacts with S-methyl-5'-thioadenosine.

The protein belongs to the spermidine/spermine synthase family. In terms of assembly, homodimer or homotetramer.

The protein resides in the cytoplasm. The enzyme catalyses S-adenosyl 3-(methylsulfanyl)propylamine + putrescine = S-methyl-5'-thioadenosine + spermidine + H(+). It participates in amine and polyamine biosynthesis; spermidine biosynthesis; spermidine from putrescine: step 1/1. In terms of biological role, catalyzes the irreversible transfer of a propylamine group from the amino donor S-adenosylmethioninamine (decarboxy-AdoMet) to putrescine (1,4-diaminobutane) to yield spermidine. This Thermoanaerobacter pseudethanolicus (strain ATCC 33223 / 39E) (Clostridium thermohydrosulfuricum) protein is Polyamine aminopropyltransferase.